The sequence spans 370 residues: Chloromuconate cycloisomerase (370 aa).

The active-site Proton acceptor is the K165. Residues D194, E220, and D245 each coordinate Mn(2+). E323 (proton donor) is an active-site residue.

The protein belongs to the mandelate racemase/muconate lactonizing enzyme family. Mn(2+) serves as cofactor.

It catalyses the reaction 2-[(2R)-2-chloro-2,5-dihydro-5-oxofuryl]acetate = 3-chloro-cis,cis-muconate + H(+). It participates in aromatic compound metabolism; 3-chlorocatechol degradation. Functionally, highly active toward chlorinated substrates but retains diminished activity toward the non-chlorinated substrates. The sequence is that of Chloromuconate cycloisomerase (clcB) from Pseudomonas putida (Arthrobacter siderocapsulatus).